A 328-amino-acid chain; its full sequence is Cytochrome c biogenesis protein CcsA (328 aa).

Helical transmembrane passes span 13–33 (ISFSVVSIVLTIYFLTFLVNL), 46–66 (GIVITFFGITGLLFTRWIYSG), 73–93 (LYESLIFLSWAFSIIHMISYF), 101–121 (LNAITAPSAIFIQGFATSGLL), 146–166 (MILGYGALLCGSLLSIALLVI), 234–254 (IISLGFIFLTVGILSGAVWAN), 263–283 (WDPKETWAFITWTIFAIFLHI), and 295–315 (AIVASTGFLLIWICYFGVNLL).

This sequence belongs to the CcmF/CycK/Ccl1/NrfE/CcsA family. May interact with Ccs1.

It is found in the plastid. It localises to the chloroplast thylakoid membrane. In terms of biological role, required during biogenesis of c-type cytochromes (cytochrome c6 and cytochrome f) at the step of heme attachment. This is Cytochrome c biogenesis protein CcsA from Arabis hirsuta (Hairy rock-cress).